The primary structure comprises 309 residues: MTELDVVVQEIAEEIAARSDRGSVAHYIPELAKVDPAGFGLVVIDADGHVAAGGDADTAFSIQSISKVFTLTLALGKIGDRLWQRVGREPSGSPFNSIVQLEFERGIPRNPFINAGAIAVTDVILSGHQPREALGEILRFMRFLTGDPTIAIDQAVAASEQRTGFRNAALANYMKSFGVLDNPVDYTLGVYFHHCAIAMSCRQLALAGRYLAHSGRNPSTGHSVVSPGRARRINAVMLTCGHYDGSGEFAYRVGLPGKSGVGGGVLAIAPGKASIAAWSPGLDASGNSHLGRVALEALSKRMGWSIFGV.

7 residues coordinate substrate: S64, N114, E160, N167, Y191, Y243, and V261.

This sequence belongs to the glutaminase family. As to quaternary structure, homotetramer.

The enzyme catalyses L-glutamine + H2O = L-glutamate + NH4(+). This chain is Glutaminase, found in Rhodopseudomonas palustris (strain BisB18).